Consider the following 352-residue polypeptide: RNA 3'-terminal phosphate cyclase (352 aa).

ATP-binding positions include Gln100 and 297 to 301 (HLADQ). His322 serves as the catalytic Tele-AMP-histidine intermediate.

This sequence belongs to the RNA 3'-terminal cyclase family. Type 1 subfamily.

Its subcellular location is the cytoplasm. The enzyme catalyses a 3'-end 3'-phospho-ribonucleotide-RNA + ATP = a 3'-end 2',3'-cyclophospho-ribonucleotide-RNA + AMP + diphosphate. Its function is as follows. Catalyzes the conversion of 3'-phosphate to a 2',3'-cyclic phosphodiester at the end of RNA. The mechanism of action of the enzyme occurs in 3 steps: (A) adenylation of the enzyme by ATP; (B) transfer of adenylate to an RNA-N3'P to produce RNA-N3'PP5'A; (C) and attack of the adjacent 2'-hydroxyl on the 3'-phosphorus in the diester linkage to produce the cyclic end product. The biological role of this enzyme is unknown but it is likely to function in some aspects of cellular RNA processing. The protein is RNA 3'-terminal phosphate cyclase of Methanosarcina mazei (strain ATCC BAA-159 / DSM 3647 / Goe1 / Go1 / JCM 11833 / OCM 88) (Methanosarcina frisia).